Consider the following 229-residue polypeptide: Claudin-25 (229 aa).

The Cytoplasmic portion of the chain corresponds to 1 to 10 (MAWSFRAKVQ). The chain crosses the membrane as a helical span at residues 11–31 (LGGLLLSLLGWVCSCVTTILP). At 32 to 81 (QWKTLNLELNEMETWIMGIWEVCVDREEVATVCKAFESFLSLPQELQVAR) the chain is on the extracellular side. A helical membrane pass occupies residues 82–102 (ILMVASHGLGLLGLLLCSFGS). The Cytoplasmic segment spans residues 103–124 (ECFQFHRIRWVFKRRLGLLGRT). Residues 125 to 145 (LEASASATTLLPVSWVAHATI) traverse the membrane as a helical segment. Over 146–164 (QDFWDDSIPDIIPRWEFGG) the chain is Extracellular. A helical membrane pass occupies residues 165 to 185 (ALYLGWAAGIFLALGGLLLIF). At 186–229 (SACLGKEDVPFPLMAGPTVPLSCAPVEESDGSFHLMLRPRNLVI) the chain is on the cytoplasmic side.

The protein belongs to the claudin family.

It localises to the cell junction. Its subcellular location is the tight junction. It is found in the cell membrane. Functionally, plays a major role in tight junction-specific obliteration of the intercellular space, through calcium-independent cell-adhesion activity. The chain is Claudin-25 (CLDN25) from Homo sapiens (Human).